Consider the following 359-residue polypeptide: Holliday junction branch migration complex subunit RuvB (359 aa).

Basic and acidic residues predominate over residues Met-1–Asn-10. The disordered stretch occupies residues Met-1 to Asp-20. The tract at residues His-4–Tyr-188 is large ATPase domain (RuvB-L). Residues Leu-27, Arg-28, Gly-69, Lys-72, Thr-73, Thr-74, Glu-135–Phe-137, Arg-178, Tyr-188, and Arg-225 contribute to the ATP site. Thr-73 lines the Mg(2+) pocket. Residues Thr-189 to Glu-259 are small ATPAse domain (RuvB-S). Residues Ser-262–Glu-359 are head domain (RuvB-H). Positions 298, 317, and 322 each coordinate DNA.

The protein belongs to the RuvB family. In terms of assembly, homohexamer. Forms an RuvA(8)-RuvB(12)-Holliday junction (HJ) complex. HJ DNA is sandwiched between 2 RuvA tetramers; dsDNA enters through RuvA and exits via RuvB. An RuvB hexamer assembles on each DNA strand where it exits the tetramer. Each RuvB hexamer is contacted by two RuvA subunits (via domain III) on 2 adjacent RuvB subunits; this complex drives branch migration. In the full resolvosome a probable DNA-RuvA(4)-RuvB(12)-RuvC(2) complex forms which resolves the HJ.

It is found in the cytoplasm. The enzyme catalyses ATP + H2O = ADP + phosphate + H(+). Its function is as follows. The RuvA-RuvB-RuvC complex processes Holliday junction (HJ) DNA during genetic recombination and DNA repair, while the RuvA-RuvB complex plays an important role in the rescue of blocked DNA replication forks via replication fork reversal (RFR). RuvA specifically binds to HJ cruciform DNA, conferring on it an open structure. The RuvB hexamer acts as an ATP-dependent pump, pulling dsDNA into and through the RuvAB complex. RuvB forms 2 homohexamers on either side of HJ DNA bound by 1 or 2 RuvA tetramers; 4 subunits per hexamer contact DNA at a time. Coordinated motions by a converter formed by DNA-disengaged RuvB subunits stimulates ATP hydrolysis and nucleotide exchange. Immobilization of the converter enables RuvB to convert the ATP-contained energy into a lever motion, pulling 2 nucleotides of DNA out of the RuvA tetramer per ATP hydrolyzed, thus driving DNA branch migration. The RuvB motors rotate together with the DNA substrate, which together with the progressing nucleotide cycle form the mechanistic basis for DNA recombination by continuous HJ branch migration. Branch migration allows RuvC to scan DNA until it finds its consensus sequence, where it cleaves and resolves cruciform DNA. This Granulibacter bethesdensis (strain ATCC BAA-1260 / CGDNIH1) protein is Holliday junction branch migration complex subunit RuvB.